We begin with the raw amino-acid sequence, 141 residues long: MQLTSFTDYGLRALIYMASLPPDKMTSISEVTEVYGVSRNHMVKIINQLSRVGFVTAVRGKNGGIRLGKPAETIRLGDVVRALEPLSLVNCNSTFCHITPACRLKQVLQQGVQNFLEELDSHTLADMVEDNPSLYKLLLVE.

One can recognise an HTH rrf2-type domain in the interval 2–129 (QLTSFTDYGL…DSHTLADMVE (128 aa)). The H-T-H motif DNA-binding region spans 28–51 (ISEVTEVYGVSRNHMVKIINQLSR). 3 residues coordinate [2Fe-2S] cluster: cysteine 91, cysteine 96, and cysteine 102.

[2Fe-2S] cluster is required as a cofactor.

In terms of biological role, nitric oxide-sensitive repressor of genes involved in protecting the cell against nitrosative stress. May require iron for activity. The chain is HTH-type transcriptional repressor NsrR from Serratia proteamaculans (strain 568).